A 304-amino-acid polypeptide reads, in one-letter code: MTLSGRIPLGGQVTDLGYAAGWRLVRAMPEAMAQGVFGAGARYAARNGGPEQLRRNLARVVGKPPADVPDDLIRASLASYARYWREAFRLPAMDHGRLGEQLDVIDIDHLWSALDAGRGAVLALPHSGNWDMAGVWLVQNYGPFTTVAERLKPESLYRRFVEYRESLGFEVLPLTGGERPPFEVLAERLTDNRPICLMAERDLTRSGVQVDFFGEATRMPAGPAKLAIETGAALFPVHCWFEGDGWGMRVYPELDTSSGDVTAITQALADRFAANIATYPADWHMLQPQWIADLSDERRARLGT.

Catalysis depends on H126, which acts as the Proton acceptor. Hexadecanoyl-CoA is bound by residues H126 and R164. Residue E200 is part of the active site. 2 residues coordinate hexadecanoyl-CoA: S206 and E229.

This sequence belongs to the LpxL/LpxM/LpxP family. In terms of assembly, monomer.

The protein resides in the cell inner membrane. It carries out the reaction a 2,6-O-bis(alpha-D-mannopyranosyl)-1-phosphatidyl-1D-myo-inositol + an acyl-CoA = a 2-O-(alpha-D-mannosyl)-6-O-(6-O-acyl-alpha-D-mannosyl)-1-phosphatidyl-1D-myo-inositol + CoA. The catalysed reaction is a 1,2-diacyl-sn-glycero-3-phospho-[alpha-D-mannopyranosyl-(1&lt;-&gt;6)-D-myo-inositol] + an acyl-CoA = a 1,2-diacyl-sn-glycero-3-phospho-[alpha-D-6-acyl-mannopyranosyl-(1&lt;-&gt;6)-D-myo-inositol] + CoA. It participates in phospholipid metabolism; phosphatidylinositol metabolism. Catalyzes the transfer of a palmitoyl moiety from palmitoyl-CoA to the 6-position of the mannose ring linked to the 2-position of myo-inositol in phosphatidyl-myo-inositol monomannoside (PIM1) or dimannoside (PIM2). The polypeptide is Phosphatidylinositol mannoside acyltransferase (Mycolicibacterium smegmatis (strain ATCC 700084 / mc(2)155) (Mycobacterium smegmatis)).